Here is a 488-residue protein sequence, read N- to C-terminus: 3-octaprenyl-4-hydroxybenzoate carboxy-lyase (488 aa).

Residue N172 participates in Mn(2+) binding. Prenylated FMN-binding positions include 175–177 (IYR), 189–191 (RWL), and 194–195 (RG). E238 contributes to the Mn(2+) binding site. D287 functions as the Proton donor in the catalytic mechanism.

Belongs to the UbiD family. Homohexamer. It depends on prenylated FMN as a cofactor. Requires Mn(2+) as cofactor.

Its subcellular location is the cell membrane. The enzyme catalyses a 4-hydroxy-3-(all-trans-polyprenyl)benzoate + H(+) = a 2-(all-trans-polyprenyl)phenol + CO2. The protein operates within cofactor biosynthesis; ubiquinone biosynthesis. In terms of biological role, catalyzes the decarboxylation of 3-octaprenyl-4-hydroxy benzoate to 2-octaprenylphenol, an intermediate step in ubiquinone biosynthesis. This Pseudomonas fluorescens (strain SBW25) protein is 3-octaprenyl-4-hydroxybenzoate carboxy-lyase.